A 575-amino-acid chain; its full sequence is Arginine--tRNA ligase (575 aa).

Residues 130–140 (ANPTGPMHVGH) carry the 'HIGH' region motif.

It belongs to the class-I aminoacyl-tRNA synthetase family. Monomer.

It localises to the cytoplasm. The enzyme catalyses tRNA(Arg) + L-arginine + ATP = L-arginyl-tRNA(Arg) + AMP + diphosphate. The polypeptide is Arginine--tRNA ligase (Magnetococcus marinus (strain ATCC BAA-1437 / JCM 17883 / MC-1)).